The following is a 359-amino-acid chain: MCNILNKIKPGVITGNEALKLFKIAKKNHFAIPAINCINTDSINIVLETAKKAKSPVIIQFSYGGSNFISGPGLTTNILHKKAIIGALSGANHVHIMAKHYNVPVILHTDHCNKNMLPWIDELINVGTKHFKTYNKPLFTSHMIDLSNEKLDYNINICSKYLEKMRKINMLLEIELGCTGGEEDGINNTKINKSLLYTQPNEVNYAYERLSSVGPEFIIAASFGNVHGVYKSGNVRLTPDILKKSQNYVSKKHNLSCNPLCFVFHGGSGSSEKDIKKSIKYGVIKMNIDTDIQWATWQGILNFYNKNNKYLHNQIGNLDNENKPNKKYYDPRTWIRSSQISVSNHLTKIFRILNSCNTL.

Ser-62 is a D-glyceraldehyde 3-phosphate binding site. The active-site Proton donor is Asp-110. Positions 111, 145, 175, and 227 each coordinate Zn(2+). Residue Gly-228 coordinates dihydroxyacetone phosphate. His-265 serves as a coordination point for Zn(2+). Residues 266–268 and 287–290 contribute to the dihydroxyacetone phosphate site; these read GGS and NIDT.

It belongs to the class II fructose-bisphosphate aldolase family. Zn(2+) serves as cofactor.

It carries out the reaction beta-D-fructose 1,6-bisphosphate = D-glyceraldehyde 3-phosphate + dihydroxyacetone phosphate. It functions in the pathway carbohydrate degradation; glycolysis; D-glyceraldehyde 3-phosphate and glycerone phosphate from D-glucose: step 4/4. Its function is as follows. Catalyzes the aldol condensation of dihydroxyacetone phosphate (DHAP or glycerone-phosphate) with glyceraldehyde 3-phosphate (G3P) to form fructose 1,6-bisphosphate (FBP) in gluconeogenesis and the reverse reaction in glycolysis. The chain is Fructose-bisphosphate aldolase class 2 (fbaA) from Buchnera aphidicola subsp. Baizongia pistaciae (strain Bp).